The chain runs to 1407 residues: DNA-directed RNA polymerase subunit beta' (1407 aa).

Cysteine 70, cysteine 72, cysteine 85, and cysteine 88 together coordinate Zn(2+). Residues aspartate 460, aspartate 462, and aspartate 464 each contribute to the Mg(2+) site. Cysteine 814, cysteine 889, cysteine 896, and cysteine 899 together coordinate Zn(2+). A disordered region spans residues 1384 to 1407 (LVGRSTSSGTEVTSPSKDAIPLGG). Residues 1386 to 1399 (GRSTSSGTEVTSPS) show a composition bias toward polar residues.

This sequence belongs to the RNA polymerase beta' chain family. In terms of assembly, the RNAP catalytic core consists of 2 alpha, 1 beta, 1 beta' and 1 omega subunit. When a sigma factor is associated with the core the holoenzyme is formed, which can initiate transcription. Mg(2+) is required as a cofactor. Requires Zn(2+) as cofactor.

It catalyses the reaction RNA(n) + a ribonucleoside 5'-triphosphate = RNA(n+1) + diphosphate. DNA-dependent RNA polymerase catalyzes the transcription of DNA into RNA using the four ribonucleoside triphosphates as substrates. This Xylella fastidiosa (strain Temecula1 / ATCC 700964) protein is DNA-directed RNA polymerase subunit beta'.